The sequence spans 148 residues: Lysozyme C (148 aa).

Positions 1–18 are cleaved as a signal peptide; sequence MKALIVLGLVLLSVTVQG. Residues 19-148 form the C-type lysozyme domain; the sequence is KVFERCELAR…VRQYVQGCGV (130 aa). 4 disulfide bridges follow: C24/C146, C48/C134, C83/C99, and C95/C113. Residues E53 and D71 contribute to the active site.

The protein belongs to the glycosyl hydrolase 22 family. Monomer.

The protein localises to the secreted. The catalysed reaction is Hydrolysis of (1-&gt;4)-beta-linkages between N-acetylmuramic acid and N-acetyl-D-glucosamine residues in a peptidoglycan and between N-acetyl-D-glucosamine residues in chitodextrins.. Its function is as follows. Lysozymes have primarily a bacteriolytic function; those in tissues and body fluids are associated with the monocyte-macrophage system and enhance the activity of immunoagents. The protein is Lysozyme C (LYZ) of Homo sapiens (Human).